The sequence spans 213 residues: MKALKIALTKGRLEKDAVALLEKAGIDCSSMTDKKRKLIFHSSTQPISFILVKAVDVMTYVKHGVADIGIVGKDVLMEASKSHYEMLDLEIGKCQFCLASTPDFDPSSYRRKIIATKYPTVASKFFREKGEDVEIIKIEGSVEIAPVLGLADAIIDIVETGSTLKENGLLIYEKMYPISARLIVNKASLKQNKTQIFQLIDQLEQVIKEERAE.

The protein belongs to the ATP phosphoribosyltransferase family. Short subfamily. Heteromultimer composed of HisG and HisZ subunits.

Its subcellular location is the cytoplasm. The catalysed reaction is 1-(5-phospho-beta-D-ribosyl)-ATP + diphosphate = 5-phospho-alpha-D-ribose 1-diphosphate + ATP. The protein operates within amino-acid biosynthesis; L-histidine biosynthesis; L-histidine from 5-phospho-alpha-D-ribose 1-diphosphate: step 1/9. Functionally, catalyzes the condensation of ATP and 5-phosphoribose 1-diphosphate to form N'-(5'-phosphoribosyl)-ATP (PR-ATP). Has a crucial role in the pathway because the rate of histidine biosynthesis seems to be controlled primarily by regulation of HisG enzymatic activity. The protein is ATP phosphoribosyltransferase of Listeria monocytogenes serotype 4b (strain F2365).